The following is a 685-amino-acid chain: RING finger protein 145 (685 aa).

The next 13 helical transmembrane spans lie at 53-73 (YIAL…LTLP), 77-97 (LVQL…HQLS), 123-143 (FTTA…VMQT), 151-171 (AHLL…IVFI), 174-194 (FAMI…LLVP), 225-245 (LVLP…QIYT), 275-295 (YSLL…LTLC), 316-336 (TEGI…LQVI), 340-360 (FLLS…MLEI), 384-404 (SLCL…CQFF), 410-430 (LLII…TLLI), 460-480 (LLEF…TLFG), and 482-502 (WTVM…WLRA). Residues 537–575 (CSICFQDMKSAVITPCSHFFHAACLKKWLYVQETCPLCH) form an RING-type; atypical zinc finger. Residues 582-685 (LQPTSSPGTP…VSTSDVNCAS (104 aa)) form a disordered region. Positions 583-602 (QPTSSPGTPTQGTPAANQNP) are enriched in low complexity. The span at 620–631 (EGIRAEEMKTSA) shows a compositional bias: basic and acidic residues.

The protein resides in the membrane. This is RING finger protein 145 (rnf145) from Danio rerio (Zebrafish).